The primary structure comprises 257 residues: Hydroxyethylthiazole kinase (257 aa).

M49 contacts substrate. ATP-binding residues include R124 and T170. G197 contacts substrate.

This sequence belongs to the Thz kinase family. Mg(2+) serves as cofactor.

It catalyses the reaction 5-(2-hydroxyethyl)-4-methylthiazole + ATP = 4-methyl-5-(2-phosphooxyethyl)-thiazole + ADP + H(+). It functions in the pathway cofactor biosynthesis; thiamine diphosphate biosynthesis; 4-methyl-5-(2-phosphoethyl)-thiazole from 5-(2-hydroxyethyl)-4-methylthiazole: step 1/1. Catalyzes the phosphorylation of the hydroxyl group of 4-methyl-5-beta-hydroxyethylthiazole (THZ). The chain is Hydroxyethylthiazole kinase from Klebsiella pneumoniae (strain 342).